Consider the following 100-residue polypeptide: Small ribosomal subunit protein uS14c (100 aa).

Belongs to the universal ribosomal protein uS14 family. Part of the 30S ribosomal subunit.

The protein resides in the plastid. The protein localises to the chloroplast. Functionally, binds 16S rRNA, required for the assembly of 30S particles. The sequence is that of Small ribosomal subunit protein uS14c from Cryptomeria japonica (Japanese cedar).